Reading from the N-terminus, the 560-residue chain is Nitrite reductase (560 aa).

An N-terminal signal peptide occupies residues 1-26 (MSNVGKPILAGLIAGLSLLGLAVAQA). The interval 27–29 (AAP) is N-terminal tail. The region spanning 30-126 (EMTAEEKEAS…ARYIQHTPDI (97 aa)) is the Cytochrome c domain. Positions 47, 50, and 51 each coordinate heme c. Residues 61-80 (KNLEPHWSKTEADGKKTEGG) are disordered. Basic and acidic residues predominate over residues 63-78 (LEPHWSKTEADGKKTE). Thr97 and Met101 together coordinate heme c. Residues 127 to 560 (PPEFSLQDMK…NVFNTMNDVY (434 aa)) are D1-heme domain. Heme d1-binding residues include His193, Arg236, Ser237, Tyr256, Arg382, and Gln500.

Homodimer in solution. Heme c is required as a cofactor. The cofactor is heme.

Its subcellular location is the periplasm. It catalyses the reaction nitric oxide + Fe(III)-[cytochrome c] + H2O = Fe(II)-[cytochrome c] + nitrite + 2 H(+). It carries out the reaction A + NH4(+) + H2O = hydroxylamine + AH2 + H(+). The chain is Nitrite reductase (nirS) from Stutzerimonas stutzeri (Pseudomonas stutzeri).